Here is a 144-residue protein sequence, read N- to C-terminus: MGRFIFVSFGLLVVFLSLSGTAADCLSGWSSYEGHCYKPFNELKNWADAENFCTQQQAGGHLVSFQSSEEADFVVKLAFQTFDHSIFWMGLSNVWNQCNWQWSNAAMLRYKAWAEESYCVYFKSTNNKWRSRSCRMMANFVCEF.

The first 23 residues, 1 to 23 (MGRFIFVSFGLLVVFLSLSGTAA), serve as a signal peptide directing secretion. 3 disulfide bridges follow: C25–C36, C53–C142, and C119–C134. The 112-residue stretch at 32–143 (YEGHCYKPFN…CRMMANFVCE (112 aa)) folds into the C-type lectin domain.

This sequence belongs to the snaclec family. Heterodimer of subunits A and B1; disulfide-linked. In terms of tissue distribution, expressed by the venom gland.

Its subcellular location is the secreted. In terms of biological role, anticoagulant protein which binds to the gamma-carboxyglutamic acid-domain regions of factors IX (F9) and factor X (F10) in the presence of calcium with a 1 to 1 stoichiometry. This is Snaclec coagulation factor IX/factor X-binding protein subunit B1 from Trimeresurus stejnegeri (Chinese green tree viper).